The following is a 156-amino-acid chain: C-type lectin lectoxin-Phi1 (156 aa).

The first 23 residues, M1 to A23, serve as a signal peptide directing secretion. Intrachain disulfides connect C27/C38, C55/C154, and C129/C146. The 122-residue stretch at H34–K155 folds into the C-type lectin domain. N35 and N109 each carry an N-linked (GlcNAc...) asparagine glycan. The Mannose-binding signature appears at E119–N121. Ca(2+) is bound by residues E127, N142, and D143.

Belongs to the true venom lectin family. Expressed by the venom gland.

The protein resides in the secreted. Functionally, mannose-binding lectin which recognizes specific carbohydrate structures and agglutinates a variety of animal cells by binding to cell-surface glycoproteins and glycolipids. May be a calcium-dependent lectin. This is C-type lectin lectoxin-Phi1 from Philodryas olfersii (Green snake).